A 393-amino-acid polypeptide reads, in one-letter code: Telomeric repeat-binding factor 2-interacting protein 1 (393 aa).

An N-acetylalanine modification is found at Ala2. Ser36 and Ser43 each carry phosphoserine. In terms of domain architecture, BRCT spans 78–101; it reads FISTQYILDCVDRNEKLDLEAYRL. Residues 104–132 are disordered; the sequence is TEQASDPKPGASTEGSTEPEPQPLTGRIA. Residue Lys111 forms a Glycyl lysine isopeptide (Lys-Gly) (interchain with G-Cter in SUMO2) linkage. The 61-residue stretch at 125 to 185 folds into the Myb-like domain; sequence QPLTGRIAYT…SLKDRYLKHL (61 aa). Phosphoserine occurs at positions 151 and 153. Lys191 is covalently cross-linked (Glycyl lysine isopeptide (Lys-Gly) (interchain with G-Cter in SUMO2)). Residues 193-304 form a disordered region; it reads LLGNAPVSPS…EEEPKVSTQE (112 aa). Phosphoserine occurs at positions 200 and 203. Residues Lys205, Lys209, and Lys237 each participate in a glycyl lysine isopeptide (Lys-Gly) (interchain with G-Cter in SUMO2) cross-link. The span at 223–252 shows a compositional bias: basic and acidic residues; that stretch reads QNKRAPDLPEEECVKGEIKENGEADNKLFE. A compositionally biased stretch (acidic residues) spans 282 to 297; sequence TPEEDSETQPDEEEEE. Lys366 is covalently cross-linked (Glycyl lysine isopeptide (Lys-Gly) (interchain with G-Cter in SUMO2)). Residues 377 to 393 carry the Nuclear localization signal motif; that stretch reads KKFGAQNVARRIEFRKK.

It belongs to the RAP1 family. As to quaternary structure, homodimer. Component of the shelterin complex (telosome) composed of TERF1, TERF2, TINF2, TERF2IP ACD and POT1. Binds to TERF2 (but not TERF1) with its C-terminus. Interacts with SLX4/BTBD12. Interacts with TERF2; the interaction is direct. Does not interact with TERF1. Associates with the I-kappa-B-kinase (IKK) core complex, composed of CHUK, IKBKB and IKBKG.

The protein localises to the nucleus. It is found in the cytoplasm. It localises to the chromosome. Its subcellular location is the telomere. Functionally, acts both as a regulator of telomere function and as a transcription regulator. Involved in the regulation of telomere length and protection as a component of the shelterin complex (telosome). In contrast to other components of the shelterin complex, it is dispensible for telomere capping and does not participate in the protection of telomeres against non-homologous end-joining (NHEJ)-mediated repair. Instead, it is required to negatively regulate telomere recombination and is essential for repressing homology-directed repair (HDR), which can affect telomere length. Does not bind DNA directly: recruited to telomeric double-stranded 5'-TTAGGG-3' repeats via its interaction with TERF2. Independently of its function in telomeres, also acts as a transcription regulator: recruited to extratelomeric 5'-TTAGGG-3' sites via its association with TERF2 or other factors, and regulates gene expression. When cytoplasmic, associates with the I-kappa-B-kinase (IKK) complex and acts as a regulator of the NF-kappa-B signaling by promoting IKK-mediated phosphorylation of RELA/p65, leading to activate expression of NF-kappa-B target genes. This chain is Telomeric repeat-binding factor 2-interacting protein 1 (Terf2ip), found in Mus musculus (Mouse).